Reading from the N-terminus, the 347-residue chain is D-alanine--D-alanine ligase (347 aa).

The ATP-grasp domain maps to 134–332; the sequence is KLYAKDLGVK…LAQSLPKTPK (199 aa). An ATP-binding site is contributed by 161-216; that stretch reads LIKFNFPFIVKPSNAGSSLGVNVVKEEKELVYALDSAFEYSKEVLIEPFIQGVKEY. Positions 288, 300, and 302 each coordinate Mg(2+).

It belongs to the D-alanine--D-alanine ligase family. It depends on Mg(2+) as a cofactor. Mn(2+) is required as a cofactor.

It localises to the cytoplasm. It catalyses the reaction 2 D-alanine + ATP = D-alanyl-D-alanine + ADP + phosphate + H(+). Its pathway is cell wall biogenesis; peptidoglycan biosynthesis. Cell wall formation. In Helicobacter pylori (strain P12), this protein is D-alanine--D-alanine ligase.